Consider the following 203-residue polypeptide: Glycerol-3-phosphate acyltransferase (203 aa).

6 helical membrane passes run 1–21, 52–72, 73–93, 115–135, 140–160, and 161–181; these read MPAWLSALLAALGGYLLGSIP, VGKGPALLVLLVDAAKGAAAV, ALGSALGSPWWVVVAALGAVI, ILLAMAWPVALATFGVWLLGI, IVSFSSLLAAVAAPLLMWALG, and QPLPYLLFALAGGVYVIAAHR.

This sequence belongs to the PlsY family. As to quaternary structure, probably interacts with PlsX.

It is found in the cell inner membrane. It carries out the reaction an acyl phosphate + sn-glycerol 3-phosphate = a 1-acyl-sn-glycero-3-phosphate + phosphate. The protein operates within lipid metabolism; phospholipid metabolism. In terms of biological role, catalyzes the transfer of an acyl group from acyl-phosphate (acyl-PO(4)) to glycerol-3-phosphate (G3P) to form lysophosphatidic acid (LPA). This enzyme utilizes acyl-phosphate as fatty acyl donor, but not acyl-CoA or acyl-ACP. The protein is Glycerol-3-phosphate acyltransferase of Synechococcus sp. (strain JA-3-3Ab) (Cyanobacteria bacterium Yellowstone A-Prime).